We begin with the raw amino-acid sequence, 162 residues long: Transcription elongation factor GreA (162 aa).

A coiled-coil region spans residues 45–75; the sequence is ENAEYEAAREKQAFIEGRIKELEDMAARAEI.

The protein belongs to the GreA/GreB family.

Its function is as follows. Necessary for efficient RNA polymerase transcription elongation past template-encoded arresting sites. The arresting sites in DNA have the property of trapping a certain fraction of elongating RNA polymerases that pass through, resulting in locked ternary complexes. Cleavage of the nascent transcript by cleavage factors such as GreA or GreB allows the resumption of elongation from the new 3'terminus. GreA releases sequences of 2 to 3 nucleotides. The sequence is that of Transcription elongation factor GreA from Rickettsia canadensis (strain McKiel).